A 616-amino-acid polypeptide reads, in one-letter code: Dihydroxy-acid dehydratase (616 aa).

Asp-81 is a Mg(2+) binding site. Position 122 (Cys-122) interacts with [2Fe-2S] cluster. Asp-123 and Lys-124 together coordinate Mg(2+). At Lys-124 the chain carries N6-carboxylysine. Residue Cys-195 participates in [2Fe-2S] cluster binding. Glu-491 lines the Mg(2+) pocket. Ser-517 (proton acceptor) is an active-site residue.

This sequence belongs to the IlvD/Edd family. In terms of assembly, homodimer. [2Fe-2S] cluster serves as cofactor. It depends on Mg(2+) as a cofactor.

It catalyses the reaction (2R)-2,3-dihydroxy-3-methylbutanoate = 3-methyl-2-oxobutanoate + H2O. The enzyme catalyses (2R,3R)-2,3-dihydroxy-3-methylpentanoate = (S)-3-methyl-2-oxopentanoate + H2O. The protein operates within amino-acid biosynthesis; L-isoleucine biosynthesis; L-isoleucine from 2-oxobutanoate: step 3/4. It participates in amino-acid biosynthesis; L-valine biosynthesis; L-valine from pyruvate: step 3/4. Functions in the biosynthesis of branched-chain amino acids. Catalyzes the dehydration of (2R,3R)-2,3-dihydroxy-3-methylpentanoate (2,3-dihydroxy-3-methylvalerate) into 2-oxo-3-methylpentanoate (2-oxo-3-methylvalerate) and of (2R)-2,3-dihydroxy-3-methylbutanoate (2,3-dihydroxyisovalerate) into 2-oxo-3-methylbutanoate (2-oxoisovalerate), the penultimate precursor to L-isoleucine and L-valine, respectively. This chain is Dihydroxy-acid dehydratase, found in Erwinia tasmaniensis (strain DSM 17950 / CFBP 7177 / CIP 109463 / NCPPB 4357 / Et1/99).